A 397-amino-acid polypeptide reads, in one-letter code: Growth-regulating factor 1 (397 aa).

A QLQ domain is found at 18 to 53; it reads PFTASQWQELEHQALIYKYMASGTPIPSDLILPLRR. 2 consecutive short sequence motifs (bipartite nuclear localization signal) follow at residues 86–105 and 123–130; these read RKAE…KKWR and RGKNRSRK. One can recognise a WRC domain in the interval 90–134; that stretch reads DPEPGRCRRTDGKKWRCSKEAYPDSKYCEKHMHRGKNRSRKPVEM. The interval 117 to 176 is disordered; it reads CEKHMHRGKNRSRKPVEMSLATPPPPSSSATSAASNTSAGVAPTTTTTSSPAPSYSRPAP. Basic residues predominate over residues 120–129; the sequence is HMHRGKNRSR. Residues 144–174 show a composition bias toward low complexity; the sequence is SSATSAASNTSAGVAPTTTTTSSPAPSYSRP.

Belongs to the GRF family.

Its subcellular location is the nucleus. In terms of biological role, transcription activator that plays a regulatory role in gibberellin-induced stem elongation. The sequence is that of Growth-regulating factor 1 (GRF1) from Oryza sativa subsp. japonica (Rice).